The sequence spans 158 residues: NAD(P)H-quinone oxidoreductase subunit N (158 aa).

This sequence belongs to the complex I NdhN subunit family. NDH-1 can be composed of about 15 different subunits; different subcomplexes with different compositions have been identified which probably have different functions.

It localises to the cellular thylakoid membrane. The catalysed reaction is a plastoquinone + NADH + (n+1) H(+)(in) = a plastoquinol + NAD(+) + n H(+)(out). It carries out the reaction a plastoquinone + NADPH + (n+1) H(+)(in) = a plastoquinol + NADP(+) + n H(+)(out). In terms of biological role, NDH-1 shuttles electrons from an unknown electron donor, via FMN and iron-sulfur (Fe-S) centers, to quinones in the respiratory and/or the photosynthetic chain. The immediate electron acceptor for the enzyme in this species is believed to be plastoquinone. Couples the redox reaction to proton translocation, and thus conserves the redox energy in a proton gradient. Cyanobacterial NDH-1 also plays a role in inorganic carbon-concentration. The sequence is that of NAD(P)H-quinone oxidoreductase subunit N from Gloeothece citriformis (strain PCC 7424) (Cyanothece sp. (strain PCC 7424)).